Here is a 171-residue protein sequence, read N- to C-terminus: MGGLEFCDQTSWYQIFIAFSLTYTPIAIYSLKVFRGTLAGIVNIFIFINCCVSFVYLMYHHSVTNTIALSLGAVIALVWGIYTLVKIVDWLVIRCRLCFLGRSYILAPPSHVDTSDGRQSLTTSLTTAFVVRKPGSTLVNGQLVPDFQRLVLGGKKAVSKGAVNLLKYVSK.

A run of 3 helical transmembrane segments spans residues 11 to 31, 38 to 58, and 73 to 93; these read SWYQ…IYSL, LAGI…VYLM, and AVIA…WLVI.

It localises to the virion membrane. The polypeptide is Protein X (VPX) (Mus musculus domesticus (western European house mouse)).